Here is a 130-residue protein sequence, read N- to C-terminus: Small ribosomal subunit protein uS11 (130 aa).

The protein belongs to the universal ribosomal protein uS11 family. As to quaternary structure, part of the 30S ribosomal subunit. Interacts with proteins S7 and S18. Binds to IF-3.

In terms of biological role, located on the platform of the 30S subunit, it bridges several disparate RNA helices of the 16S rRNA. Forms part of the Shine-Dalgarno cleft in the 70S ribosome. This is Small ribosomal subunit protein uS11 from Campylobacter hominis (strain ATCC BAA-381 / DSM 21671 / CCUG 45161 / LMG 19568 / NCTC 13146 / CH001A).